The following is a 120-amino-acid chain: Ribonuclease P protein component (120 aa).

The protein belongs to the RnpA family. In terms of assembly, consists of a catalytic RNA component (M1 or rnpB) and a protein subunit.

It catalyses the reaction Endonucleolytic cleavage of RNA, removing 5'-extranucleotides from tRNA precursor.. RNaseP catalyzes the removal of the 5'-leader sequence from pre-tRNA to produce the mature 5'-terminus. It can also cleave other RNA substrates such as 4.5S RNA. The protein component plays an auxiliary but essential role in vivo by binding to the 5'-leader sequence and broadening the substrate specificity of the ribozyme. This chain is Ribonuclease P protein component, found in Bordetella avium (strain 197N).